A 291-amino-acid polypeptide reads, in one-letter code: Ajmaline N-methyltransferase (291 aa).

The interval 71–80 (MLDVGCGIGG) is SAM motif I. Positions 133 to 139 (DGAFDLV) match the Vacuolar targeting signal motif. An SAM motif II region spans residues 134–142 (GAFDLVLSI). The interval 161–170 (VAASGATIII) is SAM motif III.

This sequence belongs to the class I-like SAM-binding methyltransferase superfamily. gTMT family. As to quaternary structure, homodimer. In terms of tissue distribution, mainly expressed in roots, but barely detectable in stems and flowers.

It localises to the vacuole membrane. The enzyme catalyses ajmaline + S-adenosyl-L-methionine = 4-methylajmaline + S-adenosyl-L-homocysteine + H(+). The catalysed reaction is norajmaline + S-adenosyl-L-methionine = 4-methylnorajmaline + S-adenosyl-L-homocysteine + H(+). It functions in the pathway alkaloid biosynthesis; ajmaline biosynthesis. Functionally, N-methyltransferase involved in the biosynthesis of ajmaline-type monoterpenoid indole alkaloids (MIAs) natural products, important plant-derived pharmaceuticals used in the therapy of heart disorders. Catalyzes the indole N-methylation of ajmaline to produce 4-methylajmaline. Also able, with a lower efficiency, to mediates the conversion of norajmaline to 4-methylnorajmaline. The chain is Ajmaline N-methyltransferase from Rauvolfia serpentina (Serpentine wood).